A 412-amino-acid chain; its full sequence is Tyrosine--tRNA ligase (412 aa).

Tyrosine 31 is a binding site for L-tyrosine. The 'HIGH' region motif lies at 36–45; sequence PTAPSLHIGH. Positions 162 and 166 each coordinate L-tyrosine. The 'KMSKS' region signature appears at 222 to 226; the sequence is KIGKT. Lysine 225 lines the ATP pocket. The S4 RNA-binding domain occupies 345–411; it reads KRWLDIVVEL…GKRKKQVIDL (67 aa).

Belongs to the class-I aminoacyl-tRNA synthetase family. TyrS type 1 subfamily. Homodimer.

Its subcellular location is the cytoplasm. It catalyses the reaction tRNA(Tyr) + L-tyrosine + ATP = L-tyrosyl-tRNA(Tyr) + AMP + diphosphate + H(+). Functionally, catalyzes the attachment of tyrosine to tRNA(Tyr) in a two-step reaction: tyrosine is first activated by ATP to form Tyr-AMP and then transferred to the acceptor end of tRNA(Tyr). The protein is Tyrosine--tRNA ligase of Chlamydia trachomatis serovar L2 (strain ATCC VR-902B / DSM 19102 / 434/Bu).